Consider the following 207-residue polypeptide: Redox-sensing transcriptional repressor Rex (207 aa).

A DNA-binding region (H-T-H motif) is located at residues 17–56 (IYLRYLSYLQQVEVTTVSSQQMGKNLDVNPAQIRKDLAAF). An NAD(+)-binding site is contributed by 91–96 (GAGHLG).

Belongs to the transcriptional regulatory Rex family. Homodimer.

The protein localises to the cytoplasm. Its function is as follows. Modulates transcription in response to changes in cellular NADH/NAD(+) redox state. This is Redox-sensing transcriptional repressor Rex from Brevibacillus brevis (strain 47 / JCM 6285 / NBRC 100599).